The chain runs to 289 residues: MMTTSYLAFPQFDPVIFSIGPLALHWYGLMYLVGFVFAMWLAVRRANKPGSGWTKDEVENLLYMGFLGVFVGGRLGYVLFYAFPSFLENPLYLFKVWDGGMSFHGGLMGVICVMLWFAHRTKRHFFQVADFIAPLIPFGLGAGRLGNFINGELWGRVTTDTPWAMLFPGSRSEDMMLAVSNPQWQTIFNQFGMLPRHPSQLYQMMLEGVALFIILNLFIRKSRPMGSVSGLFLICYGMFRIITEFFRQPDAQLGLFGGLFSMGQILSLPMVLAGILMMVWAYRRQPAQQ.

7 consecutive transmembrane segments (helical) span residues 23 to 43 (ALHWYGLMYLVGFVFAMWLAV), 61 to 81 (LLYMGFLGVFVGGRLGYVLFY), 99 to 119 (GGMSFHGGLMGVICVMLWFAH), 125 to 145 (FFQVADFIAPLIPFGLGAGRL), 199 to 219 (SQLYQMMLEGVALFIILNLFI), 226 to 246 (GSVSGLFLICYGMFRIITEFF), and 259 to 279 (LFSMGQILSLPMVLAGILMMV). Residue Arg-144 coordinates a 1,2-diacyl-sn-glycero-3-phospho-(1'-sn-glycerol).

It belongs to the Lgt family.

The protein resides in the cell inner membrane. It catalyses the reaction L-cysteinyl-[prolipoprotein] + a 1,2-diacyl-sn-glycero-3-phospho-(1'-sn-glycerol) = an S-1,2-diacyl-sn-glyceryl-L-cysteinyl-[prolipoprotein] + sn-glycerol 1-phosphate + H(+). The protein operates within protein modification; lipoprotein biosynthesis (diacylglyceryl transfer). In terms of biological role, catalyzes the transfer of the diacylglyceryl group from phosphatidylglycerol to the sulfhydryl group of the N-terminal cysteine of a prolipoprotein, the first step in the formation of mature lipoproteins. The protein is Phosphatidylglycerol--prolipoprotein diacylglyceryl transferase of Pectobacterium atrosepticum (strain SCRI 1043 / ATCC BAA-672) (Erwinia carotovora subsp. atroseptica).